The chain runs to 410 residues: Arginine deiminase (410 aa).

The Amidino-cysteine intermediate role is filled by cysteine 399.

The protein belongs to the arginine deiminase family.

The protein localises to the cytoplasm. The catalysed reaction is L-arginine + H2O = L-citrulline + NH4(+). It participates in amino-acid degradation; L-arginine degradation via ADI pathway; carbamoyl phosphate from L-arginine: step 1/2. The sequence is that of Arginine deiminase from Listeria monocytogenes serotype 4b (strain F2365).